Reading from the N-terminus, the 395-residue chain is Probable nitrate/nitrite transporter NarK2 (395 aa).

The next 12 membrane-spanning stretches (helical) occupy residues 8 to 28 (LVLATWISVVNFWAWNLIGPL), 45 to 65 (LLVATPILVGALGRIVTGPLT), 72 to 92 (AMLIAVTLASILPVLAVGVAA), 98 to 118 (ALLVFFGLFLGVAGTIFAVGI), 131 to 151 (GFSTGVFGMGMVGTALSAFFT), 157 to 177 (WFGLFTTHAIVAAALASTAVV), 205 to 225 (LPVTWEMSFLYAIVFGGFVAF), 244 to 266 (AGARTAGFALAAVLARPVGGWLS), 274 to 294 (VVLASLAGTALLAFAAALQPP), 301 to 321 (ATFITLAVCLGVGTGGVFAWV), 333 to 353 (VTGIVAAAGGLGGYFPPLVMG), and 365 to 385 (VGLLLLVATALVACTYTALHA).

The protein belongs to the major facilitator superfamily. Nitrate/nitrite porter (TC 2.A.1.8) family.

Its subcellular location is the cell membrane. In terms of biological role, involved in excretion of nitrite produced by the dissimilatory reduction of nitrate. This is Probable nitrate/nitrite transporter NarK2 (narK2) from Mycobacterium tuberculosis (strain CDC 1551 / Oshkosh).